Here is a 244-residue protein sequence, read N- to C-terminus: UPF0246 protein SGO_1307 (244 aa).

It belongs to the UPF0246 family.

This chain is UPF0246 protein SGO_1307, found in Streptococcus gordonii (strain Challis / ATCC 35105 / BCRC 15272 / CH1 / DL1 / V288).